Consider the following 287-residue polypeptide: 2-dehydro-3-deoxyphosphooctonate aldolase (287 aa).

This sequence belongs to the KdsA family.

It is found in the cytoplasm. The catalysed reaction is D-arabinose 5-phosphate + phosphoenolpyruvate + H2O = 3-deoxy-alpha-D-manno-2-octulosonate-8-phosphate + phosphate. It functions in the pathway carbohydrate biosynthesis; 3-deoxy-D-manno-octulosonate biosynthesis; 3-deoxy-D-manno-octulosonate from D-ribulose 5-phosphate: step 2/3. Its pathway is bacterial outer membrane biogenesis; lipopolysaccharide biosynthesis. This Nitrobacter hamburgensis (strain DSM 10229 / NCIMB 13809 / X14) protein is 2-dehydro-3-deoxyphosphooctonate aldolase.